A 198-amino-acid polypeptide reads, in one-letter code: NAD(P)H dehydrogenase (quinone) (198 aa).

Positions 4 to 189 (ILVLYYSMYG…SIARYQGEYV (186 aa)) constitute a Flavodoxin-like domain. FMN-binding positions include 10–15 (SMYGHI) and 78–80 (TRF). Y12 is an NAD(+) binding site. W98 contacts substrate. FMN-binding positions include 113 to 118 (STGTGG) and H133.

Belongs to the WrbA family. FMN serves as cofactor.

It catalyses the reaction a quinone + NADH + H(+) = a quinol + NAD(+). It carries out the reaction a quinone + NADPH + H(+) = a quinol + NADP(+). In Salmonella paratyphi C (strain RKS4594), this protein is NAD(P)H dehydrogenase (quinone).